Consider the following 518-residue polypeptide: 2,3-bisphosphoglycerate-independent phosphoglycerate mutase (518 aa).

Mn(2+) is bound by residues aspartate 14 and serine 64. Serine 64 (phosphoserine intermediate) is an active-site residue. Substrate contacts are provided by residues histidine 125, 155–156, arginine 187, arginine 193, 264–267, and lysine 337; these read RD and RPDR. The Mn(2+) site is built by aspartate 404, histidine 408, aspartate 445, histidine 446, and histidine 467.

This sequence belongs to the BPG-independent phosphoglycerate mutase family. The cofactor is Mn(2+).

The enzyme catalyses (2R)-2-phosphoglycerate = (2R)-3-phosphoglycerate. Its pathway is carbohydrate degradation; glycolysis; pyruvate from D-glyceraldehyde 3-phosphate: step 3/5. Its function is as follows. Catalyzes the interconversion of 2-phosphoglycerate and 3-phosphoglycerate. The protein is 2,3-bisphosphoglycerate-independent phosphoglycerate mutase of Methanococcoides burtonii (strain DSM 6242 / NBRC 107633 / OCM 468 / ACE-M).